A 396-amino-acid chain; its full sequence is 1-deoxy-D-xylulose 5-phosphate reductoisomerase (396 aa).

6 residues coordinate NADPH: Thr14, Gly15, Ser16, Ile17, Gly40, and Asn128. Lys129 is a binding site for 1-deoxy-D-xylulose 5-phosphate. An NADPH-binding site is contributed by Glu130. Asp154 is a binding site for Mn(2+). The 1-deoxy-D-xylulose 5-phosphate site is built by Ser155, Glu156, Ser180, and His203. A Mn(2+)-binding site is contributed by Glu156. Gly209 provides a ligand contact to NADPH. Residues Ser216, Asn221, Lys222, and Glu225 each contribute to the 1-deoxy-D-xylulose 5-phosphate site. Glu225 serves as a coordination point for Mn(2+).

It belongs to the DXR family. It depends on Mg(2+) as a cofactor. The cofactor is Mn(2+).

It carries out the reaction 2-C-methyl-D-erythritol 4-phosphate + NADP(+) = 1-deoxy-D-xylulose 5-phosphate + NADPH + H(+). It participates in isoprenoid biosynthesis; isopentenyl diphosphate biosynthesis via DXP pathway; isopentenyl diphosphate from 1-deoxy-D-xylulose 5-phosphate: step 1/6. In terms of biological role, catalyzes the NADPH-dependent rearrangement and reduction of 1-deoxy-D-xylulose-5-phosphate (DXP) to 2-C-methyl-D-erythritol 4-phosphate (MEP). The sequence is that of 1-deoxy-D-xylulose 5-phosphate reductoisomerase from Xylella fastidiosa (strain 9a5c).